The sequence spans 414 residues: 2,3-diketo-5-methylthiopentyl-1-phosphate enolase (414 aa).

The active-site Proton acceptor is the Lys-99. Substrate-binding positions include Lys-148, 174–177 (KDDE), His-265, Gly-338, and 360–361 (GG). Residues Lys-174, Asp-176, and Glu-177 each coordinate Mg(2+). Lys-174 is subject to N6-carboxylysine.

The protein belongs to the RuBisCO large chain family. Type IV subfamily. Homodimer. Mg(2+) serves as cofactor.

The catalysed reaction is 5-methylsulfanyl-2,3-dioxopentyl phosphate = 2-hydroxy-5-methylsulfanyl-3-oxopent-1-enyl phosphate. It functions in the pathway amino-acid biosynthesis; L-methionine biosynthesis via salvage pathway; L-methionine from S-methyl-5-thio-alpha-D-ribose 1-phosphate: step 3/6. In terms of biological role, catalyzes the enolization of 2,3-diketo-5-methylthiopentyl-1-phosphate (DK-MTP-1-P) into 2-hydroxy-3-keto-5-methylthiopentenyl-1-phosphate (HK-MTPenyl-1-P). The protein is 2,3-diketo-5-methylthiopentyl-1-phosphate enolase of Bacillus cereus (strain AH187).